The chain runs to 381 residues: L-lactate dehydrogenase (381 aa).

In terms of domain architecture, FMN hydroxy acid dehydrogenase spans 1–380 (MIISASTDYR…SADSLVRELG (380 aa)). A substrate-binding site is contributed by Tyr-24. FMN is bound by residues Ser-106 and Gln-127. Tyr-129 is a substrate binding site. FMN is bound at residue Thr-155. Residue Arg-164 participates in substrate binding. Lys-251 lines the FMN pocket. The active-site Proton acceptor is the His-275. Arg-278 contacts substrate. 306–330 (DSGIRTGLDVVRMIALGADSVLLGR) serves as a coordination point for FMN.

This sequence belongs to the FMN-dependent alpha-hydroxy acid dehydrogenase family. As to quaternary structure, homotetramer. It depends on FMN as a cofactor.

The protein resides in the cell inner membrane. It catalyses the reaction (S)-lactate + A = pyruvate + AH2. In terms of biological role, catalyzes the conversion of L-lactate to pyruvate. Is coupled to the respiratory chain. This chain is L-lactate dehydrogenase, found in Pseudomonas paraeruginosa (strain DSM 24068 / PA7) (Pseudomonas aeruginosa (strain PA7)).